The chain runs to 273 residues: uncharacterized protein (273 aa).

2 helical membrane passes run 24–44 (VGVS…VTIL) and 103–123 (IVGP…EAWA). The tract at residues 132–194 (SDLPHHGRQS…QPPAQTQPYR (63 aa)) is disordered. Positions 164–179 (SSHHIRSPAVARHHKT) are enriched in basic residues. Positions 183–192 (TTQPPAQTQP) are enriched in low complexity.

The protein localises to the cell membrane. This is an uncharacterized protein from Sinorhizobium fredii (strain NBRC 101917 / NGR234).